Consider the following 348-residue polypeptide: Lipoyl synthase (348 aa).

C55, C60, C66, C81, C85, C88, and S292 together coordinate [4Fe-4S] cluster. One can recognise a Radical SAM core domain in the interval 67 to 281 (WESREATFLI…ADAAKEMGFA (215 aa)).

The protein belongs to the radical SAM superfamily. Lipoyl synthase family. The cofactor is [4Fe-4S] cluster.

It localises to the cytoplasm. The catalysed reaction is [[Fe-S] cluster scaffold protein carrying a second [4Fe-4S](2+) cluster] + N(6)-octanoyl-L-lysyl-[protein] + 2 oxidized [2Fe-2S]-[ferredoxin] + 2 S-adenosyl-L-methionine + 4 H(+) = [[Fe-S] cluster scaffold protein] + N(6)-[(R)-dihydrolipoyl]-L-lysyl-[protein] + 4 Fe(3+) + 2 hydrogen sulfide + 2 5'-deoxyadenosine + 2 L-methionine + 2 reduced [2Fe-2S]-[ferredoxin]. Its pathway is protein modification; protein lipoylation via endogenous pathway; protein N(6)-(lipoyl)lysine from octanoyl-[acyl-carrier-protein]: step 2/2. In terms of biological role, catalyzes the radical-mediated insertion of two sulfur atoms into the C-6 and C-8 positions of the octanoyl moiety bound to the lipoyl domains of lipoate-dependent enzymes, thereby converting the octanoylated domains into lipoylated derivatives. This chain is Lipoyl synthase, found in Corynebacterium glutamicum (strain R).